The primary structure comprises 380 residues: ER-phagy receptor 1 (380 aa).

The region spanning 9 to 74 is the J domain; sequence DCYEILQVNH…DKRKWHEKDY (66 aa). The C2H2-type zinc-finger motif lies at 270-294; sequence IMCMVCNKNFRSQNQLENHENSKKH. Residues 307–337 form a disordered region; sequence KHAKEAQKNAESNKQPEDAPSESPYSNKVSS. Position 344 is a phosphoserine (S344). An AIM motif is present at residues 352–355; the sequence is FTFV. The FFAT signature appears at 361-367; sequence EFYTASE.

In terms of assembly, interacts (via the AIM motif) with atg8. Interacts (via the FFAT motif) with the vesicle-associated membrane protein-associated protein (VAP) family proteins scs2 and scs22.

The protein localises to the endoplasmic reticulum. It is found in the preautophagosomal structure. Functionally, reticulophagy receptor required for autophagosomal sequestration of endoplasmic reticulum (ER) membranes during ER stress. Confers resistance to ER stress by promoting the autophagic degradation of the ER (ER-phagy or reticulophagy). Acts as a bridging molecule to mediate the association between atg8 on the autophagic membrane and the vesicle-associated membrane protein-associated proteins (VAPs) scs2 and scs22 on the ER. May play a role in meiosis. This chain is ER-phagy receptor 1, found in Schizosaccharomyces pombe (strain 972 / ATCC 24843) (Fission yeast).